The chain runs to 347 residues: Protein FAM50 homolog (347 aa).

The span at 77-113 shows a compositional bias: basic and acidic residues; it reads EDIVREREKKLAQKKEEKDREKLKALEAKQAEKDRQR. The interval 77-142 is disordered; the sequence is EDIVREREKK…EDEEEPLEIK (66 aa). The segment covering 123 to 138 has biased composition (acidic residues); sequence PEEDEESFDDEDEEEP.

It belongs to the FAM50 family.

The polypeptide is Protein FAM50 homolog (Aedes aegypti (Yellowfever mosquito)).